Here is a 293-residue protein sequence, read N- to C-terminus: Nucleotide-binding protein BCG9842_B5683 (293 aa).

14–21 (GMSGAGKT) is a binding site for ATP. 65–68 (DLRG) provides a ligand contact to GTP.

Belongs to the RapZ-like family.

Functionally, displays ATPase and GTPase activities. This is Nucleotide-binding protein BCG9842_B5683 from Bacillus cereus (strain G9842).